The primary structure comprises 797 residues: Adhesion G-protein coupled receptor G7 (797 aa).

An N-terminal signal peptide occupies residues 1-26; that stretch reads MASCRAWNLRVLVAVVCGLLTGIILG. The Extracellular portion of the chain corresponds to 27–438; that stretch reads LGIWRIVIRI…QYPKSLDILS (412 aa). Asn-82, Asn-159, Asn-178, Asn-191, Asn-247, Asn-261, Asn-312, Asn-316, and Asn-387 each carry an N-linked (GlcNAc...) asparagine glycan. Residues 275–428 enclose the GAIN-B domain; sequence FSVQKGASSS…AVLMTFKKDY (154 aa). Intrachain disulfides connect Cys-383–Cys-410 and Cys-398–Cys-412. Residues 383–428 form a GPS region; the sequence is CVYWNLSAKDWDTYGCQKDKGTDGFLRCRCNHTTNFAVLMTFKKDY. An N-linked (GlcNAc...) asparagine glycan is attached at Asn-413. A helical membrane pass occupies residues 439-459; sequence NVGCALSVTGLALTVIFQIVT. Residues 460–468 are Cytoplasmic-facing; the sequence is RKVRKTSVT. A helical membrane pass occupies residues 469–489; the sequence is WVLVNLCISMLIFNLLFVFGI. Residues 490 to 528 are Extracellular-facing; the sequence is ENSNKNLQTSDGDINNIDFDNNDIPRTDTINIPNPMCTA. A helical transmembrane segment spans residues 529-549; sequence IAALLHYFLLVTFTWNALSAA. Residues 550–565 lie on the Cytoplasmic side of the membrane; that stretch reads QLYYLLIRTMKPLPRH. A helical transmembrane segment spans residues 566 to 586; it reads FILFISLIGWGVPAIVVAITV. The Extracellular segment spans residues 587–623; the sequence is GVIYSQNGNNPQWELDYRQEKICWLAIPEPNGVIKSP. Residues 624–644 form a helical membrane-spanning segment; it reads LLWSFIVPVTIILISNVVMFI. The Cytoplasmic segment spans residues 645–669; that stretch reads TISIKVLWKNNQNLTSTKKVSSMKK. A helical membrane pass occupies residues 670 to 690; that stretch reads IVSTLSVAVVFGITWILAYLM. Residues 691–698 lie on the Extracellular side of the membrane; it reads LVNDDSIR. A helical transmembrane segment spans residues 699-719; the sequence is IVFSYIFCLFNTTQGLQIFIL. The Cytoplasmic portion of the chain corresponds to 720–797; that stretch reads YTVRTKVFQS…SESDNAKESI (78 aa).

This sequence belongs to the G-protein coupled receptor 2 family. Adhesion G-protein coupled receptor (ADGR) subfamily.

The protein localises to the membrane. In terms of biological role, orphan receptor. The protein is Adhesion G-protein coupled receptor G7 (ADGRG7) of Homo sapiens (Human).